Consider the following 359-residue polypeptide: MALGNHSTITEFLLLGLSADPNIRALLFVLFLGIYLLTIMENLMLLLMIRADSCLHKPMYFFLSHLSFVDLCFSSVIVPKMLENLLSQRKTISVEGCLAQVFFVFVTAGTEACLLSGMAYDRHAAICRPLLYGQIMGKQLYMHLVWGSWGLGFLDALINVLLAVNMVFCEAKIIHHYSYEMPSLLPLSCSDISRSLIALLCSTLLHGLGNFLLVFLSYTRIISTILSISSTSGRSKAFSTCSAHLTAVTLYYGSGLLRHLMPNSGSPIELIFSVQYTVVTPMLNSLIYSLKNKEVKGERSLRDSSHLPQLHKGQARWKRPAFTEGRREPGHPELSIPVTPQPQGACACSALRAAPTALP.

The Extracellular portion of the chain corresponds to 1 to 25 (MALGNHSTITEFLLLGLSADPNIRA). N-linked (GlcNAc...) asparagine glycosylation is present at Asn-5. A helical membrane pass occupies residues 26 to 46 (LLFVLFLGIYLLTIMENLMLL). Over 47–54 (LMIRADSC) the chain is Cytoplasmic. Residues 55–75 (LHKPMYFFLSHLSFVDLCFSS) traverse the membrane as a helical segment. The Extracellular portion of the chain corresponds to 76 to 99 (VIVPKMLENLLSQRKTISVEGCLA). A disulfide bridge connects residues Cys-97 and Cys-189. A helical membrane pass occupies residues 100 to 120 (QVFFVFVTAGTEACLLSGMAY). Topologically, residues 121–139 (DRHAAICRPLLYGQIMGKQ) are cytoplasmic. Residues 140-160 (LYMHLVWGSWGLGFLDALINV) traverse the membrane as a helical segment. Residues 161-197 (LLAVNMVFCEAKIIHHYSYEMPSLLPLSCSDISRSLI) are Extracellular-facing. Residues 198–217 (ALLCSTLLHGLGNFLLVFLS) form a helical membrane-spanning segment. The Cytoplasmic portion of the chain corresponds to 218–237 (YTRIISTILSISSTSGRSKA). A helical membrane pass occupies residues 238–258 (FSTCSAHLTAVTLYYGSGLLR). The Extracellular portion of the chain corresponds to 259-269 (HLMPNSGSPIE). Residues 270–290 (LIFSVQYTVVTPMLNSLIYSL) form a helical membrane-spanning segment. Over 291-359 (KNKEVKGERS…ALRAAPTALP (69 aa)) the chain is Cytoplasmic. Residues 301–338 (LRDSSHLPQLHKGQARWKRPAFTEGRREPGHPELSIPV) form a disordered region.

Belongs to the G-protein coupled receptor 1 family.

The protein localises to the cell membrane. Odorant receptor. The chain is Olfactory receptor 8S1 (OR8S1) from Homo sapiens (Human).